The primary structure comprises 751 residues: Catalase-peroxidase 1 (751 aa).

The segment covering 1–11 (MTDKQHTRSVS) has biased composition (basic and acidic residues). Residues 1–31 (MTDKQHTRSVSESENPAIPSPTPKVSRPRRN) form a disordered region. Positions 103–225 (WHAAGTYRIA…LANVQMGLIY (123 aa)) form a cross-link, tryptophyl-tyrosyl-methioninium (Trp-Tyr) (with M-251). The active-site Proton acceptor is histidine 104. Positions 225–251 (YVNPEGPGGNPDPLAAARDIRETFARM) form a cross-link, tryptophyl-tyrosyl-methioninium (Tyr-Met) (with W-103). A heme b-binding site is contributed by histidine 266. Residues 345–375 (AGAKQWKPKNPEANDTVPDAHGASRRHSPTM) are disordered.

Belongs to the peroxidase family. Peroxidase/catalase subfamily. As to quaternary structure, homodimer or homotetramer. Requires heme b as cofactor. Formation of the three residue Trp-Tyr-Met cross-link is important for the catalase, but not the peroxidase activity of the enzyme.

The enzyme catalyses H2O2 + AH2 = A + 2 H2O. The catalysed reaction is 2 H2O2 = O2 + 2 H2O. Its function is as follows. Bifunctional enzyme with both catalase and broad-spectrum peroxidase activity. This is Catalase-peroxidase 1 from Cupriavidus pinatubonensis (strain JMP 134 / LMG 1197) (Cupriavidus necator (strain JMP 134)).